Here is a 417-residue protein sequence, read N- to C-terminus: D-amino acid dehydrogenase (417 aa).

3–17 contacts FAD; the sequence is VIVIGSGVIGLTSAW.

The protein belongs to the DadA oxidoreductase family. It depends on FAD as a cofactor.

It catalyses the reaction a D-alpha-amino acid + A + H2O = a 2-oxocarboxylate + AH2 + NH4(+). Its pathway is amino-acid degradation; D-alanine degradation; NH(3) and pyruvate from D-alanine: step 1/1. Functionally, oxidative deamination of D-amino acids. The protein is D-amino acid dehydrogenase of Vibrio atlanticus (strain LGP32) (Vibrio splendidus (strain Mel32)).